A 691-amino-acid polypeptide reads, in one-letter code: Elongation factor G (691 aa).

The tr-type G domain occupies Glu-8–Ile-282. GTP-binding positions include Ala-17 to Thr-24, Asp-81 to His-85, and Asn-135 to Asp-138.

The protein belongs to the TRAFAC class translation factor GTPase superfamily. Classic translation factor GTPase family. EF-G/EF-2 subfamily.

Its subcellular location is the cytoplasm. In terms of biological role, catalyzes the GTP-dependent ribosomal translocation step during translation elongation. During this step, the ribosome changes from the pre-translocational (PRE) to the post-translocational (POST) state as the newly formed A-site-bound peptidyl-tRNA and P-site-bound deacylated tRNA move to the P and E sites, respectively. Catalyzes the coordinated movement of the two tRNA molecules, the mRNA and conformational changes in the ribosome. The sequence is that of Elongation factor G from Synechococcus sp. (strain WH7803).